Consider the following 533-residue polypeptide: Calcitonin receptor (533 aa).

The N-terminal stretch at 1-41 (MTPRRSRVKRRNLRKPKMRFLLVNRFTLLLLLLVSPTPVLQ) is a signal peptide. Topologically, residues 42–163 (APTNLTDSGL…FTSEKLQNAY (122 aa)) are extracellular. Asn-45, Asn-90, Asn-142, and Asn-147 each carry an N-linked (GlcNAc...) asparagine glycan. Cystine bridges form between Cys-72-Cys-98, Cys-89-Cys-129, and Cys-112-Cys-151. A helical membrane pass occupies residues 164 to 186 (VLYYLALVGHSLSIAALVASMLI). Residues 187 to 198 (FWIFKNLSCQRV) lie on the Cytoplasmic side of the membrane. A helical membrane pass occupies residues 199-219 (TLHKHMFLTYILNSIIIIIHL). Residues 220 to 273 (VEVVPNGDLVRRDPMHIFHHNTHMWTMQWELSPPLPLSAHEGKMDPHASEVISC) are Extracellular-facing. Cys-273 and Cys-343 form a disulfide bridge. The helical transmembrane segment at 274-296 (KVLHFLHQYMMSCNYFWMLCEGI) threads the bilayer. Topologically, residues 297–313 (YLHTLIVMAVFTDEQRL) are cytoplasmic. Residues 314-334 (RWYYLLGWGFPIVPTIIHAIT) form a helical membrane-spanning segment. Residues 335–350 (RALYYNDNCWLSAETH) are Extracellular-facing. A helical membrane pass occupies residues 351–374 (LLYIIHGPVMVALVVNFFFLLNIV). The Cytoplasmic segment spans residues 375-394 (RVLVTKMRQTHEAESYMYLK). Residues 395–413 (AVKATMVLVPLLGIQFVVF) traverse the membrane as a helical segment. Over 414-421 (PWRPSNKV) the chain is Extracellular. The chain crosses the membrane as a helical span at residues 422–448 (LGKIYDYLMHSLIHFQGFFVATIYCFC). Topologically, residues 449 to 533 (NHEVQVTLKR…MNVIQQDASA (85 aa)) are cytoplasmic.

Belongs to the G-protein coupled receptor 2 family. In terms of assembly, heterodimer of CALCR and RAMP1, RAMP2 or RAMP3; the receptor complexes function as AMYR1, AMYR2 and AMYR3 receptors, respectively, and respond to amylin/IAPP, calcitonin/CT and CGRP1 ligands. Interacts with GPRASP2.

It localises to the cell membrane. Functionally, g protein-coupled receptor activated by ligand peptides amylin (IAPP), calcitonin (CT/CALCA) and calcitonin gene-related peptide type 1 (CGRP1/CALCA). CALCR interacts with receptor-activity-modifying proteins RAMP1, 2 and 3 to form receptor complexes AMYR1, 2 and 3, respectively. IAPP, CT and CGRP1 activate CALCR and AMYRs with distinct modes of receptor activation resulting in specific phenotypes. Ligand binding causes a conformation change that triggers signaling via guanine nucleotide-binding proteins (G proteins) and modulates the activity of downstream effectors. Activates cAMP-dependent pathway. The polypeptide is Calcitonin receptor (Mus musculus (Mouse)).